The chain runs to 375 residues: All-trans-retinol dehydrogenase [NAD(+)] ADH1B (375 aa).

Residue serine 2 is modified to N-acetylserine. Phosphoserine is present on serine 23. Tyrosine 35 is modified (phosphotyrosine). Zn(2+)-binding residues include cysteine 47, histidine 68, cysteine 98, cysteine 101, cysteine 104, cysteine 112, and cysteine 175. Residues 200–205 (GLGGVG), aspartate 224, lysine 229, 293–295 (VGV), and arginine 370 each bind NAD(+).

It belongs to the zinc-containing alcohol dehydrogenase family. As to quaternary structure, homodimer or heterodimer of closely related subunits. Requires Zn(2+) as cofactor.

Its subcellular location is the cytoplasm. The catalysed reaction is all-trans-retinol + NAD(+) = all-trans-retinal + NADH + H(+). It catalyses the reaction all-trans-4-hydroxyretinol + NAD(+) = all-trans-4-hydroxyretinal + NADH + H(+). It carries out the reaction all-trans-4-oxoretinol + NAD(+) = all-trans-4-oxoretinal + NADH + H(+). Catalyzes the NAD-dependent oxidation of all-trans-retinol and its derivatives such as all-trans-4-hydroxyretinol and may participate in retinoid metabolism. In vitro can also catalyze the NADH-dependent reduction of all-trans-retinal and its derivatives such as all-trans-4-oxoretinal. Catalyzes in the oxidative direction with higher efficiency. Has the same affinity for all-trans-4-hydroxyretinol and all-trans-4-oxoretinal. This is All-trans-retinol dehydrogenase [NAD(+)] ADH1B from Pan troglodytes (Chimpanzee).